A 166-amino-acid chain; its full sequence is Transcription antitermination protein NusB (166 aa).

Over residues 1–18 (MISDESDRFNPRDPKPAD) the composition is skewed to basic and acidic residues. A disordered region spans residues 1-30 (MISDESDRFNPRDPKPADAGKPSKSAKRRE).

This sequence belongs to the NusB family.

Functionally, involved in transcription antitermination. Required for transcription of ribosomal RNA (rRNA) genes. Binds specifically to the boxA antiterminator sequence of the ribosomal RNA (rrn) operons. This Pseudomonas fluorescens (strain Pf0-1) protein is Transcription antitermination protein NusB.